Consider the following 1359-residue polypeptide: DNA-directed RNA polymerase subunit beta (1359 aa).

It belongs to the RNA polymerase beta chain family. In terms of assembly, the RNAP catalytic core consists of 2 alpha, 1 beta, 1 beta' and 1 omega subunit. When a sigma factor is associated with the core the holoenzyme is formed, which can initiate transcription.

The catalysed reaction is RNA(n) + a ribonucleoside 5'-triphosphate = RNA(n+1) + diphosphate. Functionally, DNA-dependent RNA polymerase catalyzes the transcription of DNA into RNA using the four ribonucleoside triphosphates as substrates. This is DNA-directed RNA polymerase subunit beta from Nitrosomonas eutropha (strain DSM 101675 / C91 / Nm57).